Here is a 156-residue protein sequence, read N- to C-terminus: Transcriptional repressor NrdR (156 aa).

A zinc finger spans residues 3–34; that stretch reads CPYCGHLEDRVVDSRETQDGQATRRRRACLSC. Residues 49-139 enclose the ATP-cone domain; sequence PQVVKKDGRR…VYRAFRDVGE (91 aa).

The protein belongs to the NrdR family. Zn(2+) serves as cofactor.

Functionally, negatively regulates transcription of bacterial ribonucleotide reductase nrd genes and operons by binding to NrdR-boxes. The polypeptide is Transcriptional repressor NrdR (Anaeromyxobacter dehalogenans (strain 2CP-C)).